Consider the following 280-residue polypeptide: Hydroxyacylglutathione hydrolase, mitochondrial (280 aa).

N6-acetyllysine is present on Lys-61. Zn(2+) is bound by residues His-74, His-76, Asp-78, and His-79. N6-acetyllysine is present on Lys-88. The Zn(2+) site is built by His-130 and Asp-154. Residues 163 to 165 (KFY) and 193 to 195 (HEY) contribute to the substrate site. His-193 is a Zn(2+) binding site. Lys-201 carries the post-translational modification N6-acetyllysine; alternate. Lys-201 carries the N6-succinyllysine; alternate modification. 269–272 (RREK) lines the substrate pocket.

Belongs to the metallo-beta-lactamase superfamily. Glyoxalase II family. In terms of assembly, monomer. Zn(2+) is required as a cofactor. In terms of tissue distribution, testis.

Its subcellular location is the mitochondrion matrix. The protein resides in the cytoplasm. It catalyses the reaction an S-(2-hydroxyacyl)glutathione + H2O = a 2-hydroxy carboxylate + glutathione + H(+). The enzyme catalyses (R)-S-lactoylglutathione + H2O = (R)-lactate + glutathione + H(+). It functions in the pathway secondary metabolite metabolism; methylglyoxal degradation; (R)-lactate from methylglyoxal: step 2/2. In terms of biological role, thiolesterase that catalyzes the hydrolysis of S-D-lactoyl-glutathione to form glutathione and D-lactic acid. The chain is Hydroxyacylglutathione hydrolase, mitochondrial (HAGH) from Callithrix jacchus (White-tufted-ear marmoset).